Consider the following 201-residue polypeptide: Dephospho-CoA kinase (201 aa).

The region spanning 4 to 201 is the DPCK domain; that stretch reads AFFVTASIAC…VIQEISKGNM (198 aa). 12 to 17 contributes to the ATP binding site; it reads ACGKST.

It belongs to the CoaE family.

Its subcellular location is the cytoplasm. It carries out the reaction 3'-dephospho-CoA + ATP = ADP + CoA + H(+). The protein operates within cofactor biosynthesis; coenzyme A biosynthesis; CoA from (R)-pantothenate: step 5/5. Its function is as follows. Catalyzes the phosphorylation of the 3'-hydroxyl group of dephosphocoenzyme A to form coenzyme A. The sequence is that of Dephospho-CoA kinase from Campylobacter jejuni subsp. jejuni serotype O:2 (strain ATCC 700819 / NCTC 11168).